The chain runs to 378 residues: MSESQSASRDALRRARRVVVKIGSALLTNDGRGLDADAIGEWVDQIAALHARGIEVVLVSSGAVAEGMARLGWVTRPSAVHELQAAAAVGQSGLSQCYEEHFARHGLRSAQVLLTHDDLSNRKRYLNARSALRSLVALRVVPVINENDTVVTDEIRFGDNDTLGALVANLLEADALVLLTDQEGLFDADPRHDPEARLIAEGRADDPALAAVAGDGGALGRGGMATKVRAARLAARSGALTAIASGRQPEVLTRLMQGETLGTLLMPDHAPLAARKRWLAGQLQVRGTLVLDAGAVKVLREHGSSLLPVGVRRVEGEFKRGDMLVCVDEQGQRIAKGLVNYGSDEARRIMGQPSRRIEELLGYMESPELIHRDNLVIV.

Lys-21 serves as a coordination point for ATP. Substrate is bound by residues Ser-61, Asp-148, and Asn-160. 180–181 (TD) provides a ligand contact to ATP. Residues 286 to 364 (RGTLVLDAGA…RRIEELLGYM (79 aa)) enclose the PUA domain.

Belongs to the glutamate 5-kinase family.

It localises to the cytoplasm. The catalysed reaction is L-glutamate + ATP = L-glutamyl 5-phosphate + ADP. It functions in the pathway amino-acid biosynthesis; L-proline biosynthesis; L-glutamate 5-semialdehyde from L-glutamate: step 1/2. In terms of biological role, catalyzes the transfer of a phosphate group to glutamate to form L-glutamate 5-phosphate. In Chromohalobacter salexigens (strain ATCC BAA-138 / DSM 3043 / CIP 106854 / NCIMB 13768 / 1H11), this protein is Glutamate 5-kinase.